Here is a 479-residue protein sequence, read N- to C-terminus: MAQHTVYFPDAFLTQMREAMPSTLSFDDFLAACQRPLRRSIRVNTLKISVADFLQLTAPYGWTLTPIPWCEEGFWIERDDEDALPLGSTAEHLSGLFYIQEASSMLPVAALFADGNAPQRVMDVAAAPGSKTTQIAARMNNEGAILANEFSASRVKVLHANISRCGISNVALTHFDGRVFGAAVPEMFDAILLDAPCSGEGVVRKDPDALKNWSPESNQEIAATQRELIDSAFHALRPGGTLVYSTCTLNREENEAVCLWLKETYPDAVEFLPLGDLFPGANKALTEEGFLHVFPQIYDCEGFFVARLRKTQAIPVLPAPKYKVGNFPFSPVKDREAGQIRQAAAGVGLNWDGNLRLWQRDKELWLFPVGIEALIGKVRFSRLGIKLAETHNKGYRWQHEAVIALASPDNVNAFELTPQEAEEWYRGRDVYPQAAPVADDVLVTFQHQPIGLAKRIGSRLKNSYPRELVRDGKLFTGNA.

S-adenosyl-L-methionine contacts are provided by residues 125–131, Glu-149, Asp-176, and Asp-194; that span reads AAAPGSK. Cys-247 acts as the Nucleophile in catalysis.

It belongs to the class I-like SAM-binding methyltransferase superfamily. RsmB/NOP family.

It is found in the cytoplasm. The enzyme catalyses cytidine(1407) in 16S rRNA + S-adenosyl-L-methionine = 5-methylcytidine(1407) in 16S rRNA + S-adenosyl-L-homocysteine + H(+). In terms of biological role, specifically methylates the cytosine at position 1407 (m5C1407) of 16S rRNA. This Escherichia coli (strain SMS-3-5 / SECEC) protein is Ribosomal RNA small subunit methyltransferase F.